Here is a 513-residue protein sequence, read N- to C-terminus: MTKLVNEMILVLDFGSQYNQLITRRIREFGVYSELHPHTLTAEEIKEMNPKGIILSGGPNSVYDEGSFRCDEKIFELDIPVLGICYGMQLMTHYLGGKVEAASQREYGKANIQIQGTPDLFKDLPEEQVVWMSHGDLVVEVPEGFTVDATSHHCPNSAMSKADKNWYGVQFHPEVRHSEYGNDLLKNFVFGVCDCEGKWSMENFIEIEMQKIRETVGDKQVLCALSGGVDSSVVAALIHKAIGDQLTCIFVDHGLLRKGEAEGVMKTFSEGFNMNVIKVDAKDRFLNKLKGVSDPEQKRKIIGNEFIYVFDDEADKLKGIDYLAQGTLYTDIIESGTATAQTIKSHHNVGGLPEDMQFELIEPLNTLFKDEVRALGTELGLPDDIVWRQPFPGPGLGIRVLGEVTEEKLEIVRESDAILREEVANHGLERDIWQYFTVLPDIRSVGVMGDARTYDYTIGIRAVTSIDGMTSDWARIPWDVLEVISTRIVNEVKHINRVVYDITSKPPATIEWE.

A Glutamine amidotransferase type-1 domain is found at methionine 8–lysine 198. The active-site Nucleophile is the cysteine 85. Catalysis depends on residues histidine 172 and glutamate 174. The GMPS ATP-PPase domain maps to tryptophan 199–arginine 388. Serine 226–serine 232 contributes to the ATP binding site.

Homodimer.

The catalysed reaction is XMP + L-glutamine + ATP + H2O = GMP + L-glutamate + AMP + diphosphate + 2 H(+). It functions in the pathway purine metabolism; GMP biosynthesis; GMP from XMP (L-Gln route): step 1/1. Catalyzes the synthesis of GMP from XMP. The protein is GMP synthase [glutamine-hydrolyzing] of Bacillus velezensis (strain DSM 23117 / BGSC 10A6 / LMG 26770 / FZB42) (Bacillus amyloliquefaciens subsp. plantarum).